The sequence spans 367 residues: SRFRPGWLARSSMVAATLTGADSYWVGDHLNGLVPRSIATPEYLGIAAKLVPSVDANYEPWTMLGNLAYGRPKRLRLGICVTDAGRRNPAVTAQAAATLQLLTRGNAILGIGVGEREGNEPYGVEWTRPVARFEEALATIRALWNSNGELVSRESAYFPLQNAAFELPPYRGKWPEIWVAAHGPRMLRATGRYADAWVPIVLVRPGDYSTALEAVRTAASDAGRDPMSIIPSAVRGVITGRDRDDVEEALDSVVVKMTALGVPGTAWARHGVEHPMGADFAGVQDVIPQTMDEQTVLSYTAKVPPALMKEVVFSGTPEEVVDQVAQWRDHGLEYLLVINGSLVNPSLRKAVAASLPHAKVLRGLKKL.

It belongs to the mer family. Phthiodiolone/phenolphthiodiolone dimycocerosates ketoreductase subfamily.

Catalyzes the reduction of the keto moiety of phthiodiolone dimycocerosates (DIM B) and glycosylated phenolphthiodiolone dimycocerosates to form the intermediate compounds phthiotriol and glycosylated phenolphthiotriol dimycocerosates during phthiocerol dimycocerosates (DIM A) and glycosylated phenolphthiocerol dimycocerosates (PGL) biosynthesis. This chain is Phthiodiolone/phenolphthiodiolone dimycocerosates ketoreductase, found in Mycobacterium kansasii.